The following is a 120-amino-acid chain: UPF0715 membrane protein YwlA (120 aa).

A run of 4 helical transmembrane segments spans residues 3 to 23 (YNYTVLLSAFTMSVLYSVIYI), 26 to 46 (FIIAALITMAFYFLFPYLIFA), 63 to 83 (LYLLYYLAAAFIANAIIFGML), and 95 to 115 (AFYLFAVLTALIYWIWDSVLL).

It belongs to the UPF0715 family.

It is found in the cell membrane. In Bacillus subtilis (strain 168), this protein is UPF0715 membrane protein YwlA (ywlA).